A 355-amino-acid polypeptide reads, in one-letter code: MVCCFGKKDERTKTIEKELHKERKIMRRQINLLLLGSGESGKSTFVKQMHIIHGAGEFTADEVRAYRQQIYQNAISAMRVLLDARNKLGIAWEDPKRQVEVEKVMRFSVGDLLKGIDFTTFVEVAPIISDFWNDAAIRKTYEQRNLFQISDSCQYFFEHIPRIAMPDFYPTNRDILFCRKATRGISEHIFEINKIPFRFIDVGGQRSQRQKWFQCFTDITSILFMVASNEYDQVILEDRRTNRVVESRSVFETIVNNRAFSNVSIILFMNKNDLLQEKVPKSDIRQYFTDFTGDHTLVRDVQFFLVDKFEASRRDRARPFFYHFTTAVDTENIRRVFRDVRESILEQNLKTLMMQ.

One can recognise a G-alpha domain in the interval 28–355 (RQINLLLLGS…EQNLKTLMMQ (328 aa)). A G1 motif region spans residues 31 to 44 (NLLLLGSGESGKST). Residues 36–43 (GSGESGKS), 176–182 (LFCRKAT), 201–205 (DVGGQ), 270–273 (NKND), and Ala327 contribute to the GTP site. Positions 43 and 182 each coordinate Mg(2+). The segment at 174-182 (DILFCRKAT) is G2 motif. Residues 197–206 (FRFIDVGGQR) form a G3 motif region. A G4 motif region spans residues 266–273 (ILFMNKND). The tract at residues 325–330 (TTAVDT) is G5 motif.

Belongs to the G-alpha family. In terms of assembly, g proteins are composed of 3 units; alpha, beta and gamma. The alpha chain contains the guanine nucleotide binding site.

Its function is as follows. Guanine nucleotide-binding proteins (G proteins) are involved as modulators or transducers in various transmembrane signaling systems. May play a role in resistance to fungal infection in the epidermis by regulating the up-regulation of several antimicrobial peptides of the NLP and CNC families. Upstream of plc-3, tpa-1 and the p38-like pathway, required for the expression of antimicrobial peptide nlp-29 in the epidermis in response to fungal infection or physical injury. The protein is Guanine nucleotide-binding protein alpha-12 subunit (gpa-12) of Caenorhabditis elegans.